A 369-amino-acid chain; its full sequence is GDSL esterase/lipase At5g42170 (369 aa).

The signal sequence occupies residues 1 to 16 (MSRLVYVIFLLVVVEG). Residues Asn-28 and Asn-45 are each glycosylated (N-linked (GlcNAc...) asparagine). The active-site Nucleophile is Ser-57. Residues Asn-203 and Asn-336 are each glycosylated (N-linked (GlcNAc...) asparagine). Active-site residues include Asp-344 and His-347.

This sequence belongs to the 'GDSL' lipolytic enzyme family.

The protein localises to the secreted. The polypeptide is GDSL esterase/lipase At5g42170 (Arabidopsis thaliana (Mouse-ear cress)).